The primary structure comprises 626 residues: KVREGLHVGTGEKVAVKVIDKKKAKKDTYVTKNLRREGQIQQMIRHPNITQLLDILETENSYYLVMELCPGGNLMHKIYEKKRLEEHEARKYIRQLILAVEHLHRAGVVHRDLKIENLLLDENNNIKLIDFGLSNCAGILGYSDPFSTQCGSPAYAAPELLARKKYGPKVDVWSIGVNMYAMLTGTLPFTVEPFSLRALYQKMVDKDMNPLPTHISPAAISCLRSLLEPDPLKRPNIQQALANRWLNDNYHGKGHHTFPNRIHLEDLSQSVVLHMSEKLGYKHSDVINVILSNRACHTLAVYFLLNWKLEHYLVNMRKPDINDNVCHKNQFHQSEKYKMNKNSYEERRSKDLEKRGEQQQQRAIPRKLEKCSPSHRQSTCLTPQGHSSSKGPIKERRSSKSERESFGGLSPFHEVRITKTGCMNSCSLEYLEIQSPDPRTPKIMRRQDSHSQETVNVNMGSRIRETHLNVVRSFESVNREDQIESLSPNHQYRVLGSPMSFSPRHSSERTLSPIFHFDNTSPLKGHSNQASFTYDDKSSPSSPESMSPTSPHSPSCNNNISGNLGSPNCVRSRGRFPMMGIGQMLRKRNQVVSPKGEKPLETRMPPLHQMSPGYASFNSSDMNGFC.

ATP contacts are provided by residues 1-2 (KV) and Lys17. Residues 1-246 (KVREGLHVGT…IQQALANRWL (246 aa)) enclose the Protein kinase domain. Asp112 functions as the Proton acceptor in the catalytic mechanism. The span at 336 to 357 (KYKMNKNSYEERRSKDLEKRGE) shows a compositional bias: basic and acidic residues. Disordered stretches follow at residues 336 to 407 (KYKM…ESFG), 477 to 574 (VNRE…RSRG), and 590 to 615 (QVVS…PGYA). Residues 374-390 (SHRQSTCLTPQGHSSSK) show a composition bias toward polar residues. The span at 392–405 (PIKERRSSKSERES) shows a compositional bias: basic and acidic residues. Polar residues predominate over residues 518–532 (DNTSPLKGHSNQASF). The segment covering 539-555 (SPSSPESMSPTSPHSPS) has biased composition (low complexity). Positions 556-566 (CNNNISGNLGS) are enriched in polar residues.

This sequence belongs to the protein kinase superfamily. CAMK Ser/Thr protein kinase family. SNF1 subfamily. In terms of tissue distribution, in the egg, expressed predominantly in the animal hemisphere. This pattern of expression persists throughout the cleavage and blastula stages. At the gastrula stage, expression is restricted to the ectoderm. In later-stage embryos, expressed over the entire embryonic surface including the open neural plate at stage 15 and the neural tube at stage 22. In tadpoles, strongly expressed in the neural tube, motor neurons, brain regions and sensory organs (otic vesicle and eye). Also expressed in the perisomitic mesoderm, brachial arches and embryonic epidermis of tadpoles.

It catalyses the reaction L-seryl-[protein] + ATP = O-phospho-L-seryl-[protein] + ADP + H(+). It carries out the reaction L-threonyl-[protein] + ATP = O-phospho-L-threonyl-[protein] + ADP + H(+). This Xenopus laevis (African clawed frog) protein is Hormonally up-regulated neu tumor-associated kinase homolog B (hunk-b).